A 286-amino-acid chain; its full sequence is Beta-lactamase SHV-1 (286 aa).

The signal sequence occupies residues 1-21; that stretch reads MRYIRLCIISLLATLPLAVHA. Serine 66 serves as the catalytic Acyl-ester intermediate. A disulfide bridge connects residues cysteine 73 and cysteine 119. Glutamate 164 functions as the Proton acceptor in the catalytic mechanism. Residue 230–232 coordinates substrate; sequence KTG.

The protein belongs to the class-A beta-lactamase family.

The catalysed reaction is a beta-lactam + H2O = a substituted beta-amino acid. The polypeptide is Beta-lactamase SHV-1 (bla) (Escherichia coli).